A 986-amino-acid chain; its full sequence is Replication factor C subunit 1 (986 aa).

Residues 1–95 (MQRGIDSFFK…ALSKLKRHVD (95 aa)) form a disordered region. 6 positions are modified to phosphoserine: serine 18, serine 28, serine 40, serine 41, serine 48, and serine 58. A Phosphothreonine modification is found at threonine 60. Residues serine 62 and serine 63 each carry the phosphoserine modification. Threonine 71 carries the phosphothreonine modification. Phosphoserine is present on residues serine 128, serine 137, serine 149, serine 154, serine 156, serine 164, and serine 194. Residues 136-147 (ESIKEAAPEKKV) are compositionally biased toward basic and acidic residues. 2 disordered regions span residues 136 to 203 (ESIK…ERHE) and 317 to 388 (KQVK…NDVP). Threonine 197 carries the phosphothreonine modification. Residues 232–322 (GSPDCLSGLT…SGIAKQVKEE (91 aa)) form the BRCT domain. Composition is skewed to basic and acidic residues over residues 317-364 (KQVK…EKHD) and 370-385 (VKEE…DKLN). 487 to 494 (GPPGIGKT) lines the ATP pocket. A disordered region spans residues 913–986 (SEAAGADDDY…ASKSKAKAKK (74 aa)). Residues 917 to 932 (GADDDYLDEGPGEEDG) are compositionally biased toward acidic residues. Residues serine 938 and serine 939 each carry the phosphoserine modification. Residues 955 to 959 (KAKKR) carry the Nuclear localization signal motif. Positions 962-979 (TSKASGGSKKATSSTASK) are enriched in low complexity.

It belongs to the activator 1 large subunit family. In terms of assembly, interacts with C-terminus of PCNA.

It localises to the nucleus. Its function is as follows. The elongation of primed DNA templates by DNA polymerase delta and epsilon requires the action of the accessory proteins proliferating cell nuclear antigen (PCNA) and activator 1. This subunit binds to the primer-template junction. This chain is Replication factor C subunit 1 (Gnf1), found in Drosophila melanogaster (Fruit fly).